The following is a 527-amino-acid chain: Eukaryotic translation initiation factor 3 subunit D (527 aa).

The segment at 100-136 is disordered; it reads QQNKRGGSNAGGRGGRGGMRGGRFGSNNKYWNDRRQR. The segment covering 107-123 has biased composition (gly residues); sequence SNAGGRGGRGGMRGGRF. The interval 264-277 is RNA gate; sequence SEHLTVNENLTAHH. Residues 503–527 form a disordered region; that stretch reads DQIEEETQEEEEEEQSKGWVEESRE. A compositionally biased stretch (acidic residues) spans 504–516; sequence QIEEETQEEEEEE. A compositionally biased stretch (basic and acidic residues) spans 517–527; that stretch reads QSKGWVEESRE.

This sequence belongs to the eIF-3 subunit D family. In terms of assembly, component of the eukaryotic translation initiation factor 3 (eIF-3) complex.

Its subcellular location is the cytoplasm. Functionally, mRNA cap-binding component of the eukaryotic translation initiation factor 3 (eIF-3) complex, which is involved in protein synthesis of a specialized repertoire of mRNAs and, together with other initiation factors, stimulates binding of mRNA and methionyl-tRNAi to the 40S ribosome. The eIF-3 complex specifically targets and initiates translation of a subset of mRNAs involved in cell proliferation. In the eIF-3 complex, eif3d specifically recognizes and binds the 7-methylguanosine cap of a subset of mRNAs. This is Eukaryotic translation initiation factor 3 subunit D (eif3d) from Dictyostelium discoideum (Social amoeba).